The sequence spans 382 residues: Dodecanoyl-[acyl-carrier-protein] hydrolase, chloroplastic (382 aa).

The N-terminal 83 residues, methionine 1–asparagine 83, are a transit peptide targeting the chloroplast. Active-site residues include asparagine 283, histidine 285, and cysteine 320.

The protein belongs to the acyl-ACP thioesterase family.

Its subcellular location is the plastid. The protein resides in the chloroplast. It catalyses the reaction dodecanoyl-[ACP] + H2O = dodecanoate + holo-[ACP] + H(+). Plays an essential role in chain termination during de novo fatty acid synthesis. High thioesterase activity for myristoyl-ACP. The polypeptide is Dodecanoyl-[acyl-carrier-protein] hydrolase, chloroplastic (Cinnamomum camphora (Camphor tree)).